We begin with the raw amino-acid sequence, 285 residues long: Golgi phosphoprotein 3-like (285 aa).

A disordered region spans residues 1–43; that stretch reads MTTLTHRTRRTEVSKSSEKKIESEEDTNQERSPDNEDPGDSKD. Basic and acidic residues predominate over residues 10 to 43; sequence RTEVSKSSEKKIESEEDTNQERSPDNEDPGDSKD. Positions 67 and 76 each coordinate a 1,2-diacyl-sn-glycero-3-phospho-(1D-myo-inositol 4-phosphate). Residue Ser112 is modified to Phosphoserine. Arg157 and Arg160 together coordinate a 1,2-diacyl-sn-glycero-3-phospho-(1D-myo-inositol 4-phosphate). Positions 176 to 187 are beta-hairpin required for oligomerization; the sequence is EKQNFLLFDMTT.

Belongs to the GOLPH3/VPS74 family. Homooligomer. Does not interact MYO18; differs from GOLPH3 by its inability to interact with MYO18. May interact with ARF1. As to expression, expressed in a subset of tissues tested with higher expression in salivary gland, small intestine and skin (at protein level).

It is found in the golgi apparatus. The protein resides in the golgi stack membrane. The protein localises to the trans-Golgi network membrane. Its function is as follows. Phosphatidylinositol-4-phosphate-binding protein that may antagonize the action of GOLPH3 which is required for the process of vesicle budding at the Golgi and anterograde transport to the plasma membrane. The protein is Golgi phosphoprotein 3-like (Golph3l) of Mus musculus (Mouse).